Reading from the N-terminus, the 46-residue chain is Iota-conotoxin RXIA (46 aa).

4-hydroxyproline; partial is present on residues Pro-2 and Pro-11. 4 disulfide bridges follow: Cys-5-Cys-19, Cys-12-Cys-22, Cys-18-Cys-27, and Cys-21-Cys-38. Pro-29 bears the 4-hydroxyproline mark. Residue Phe-44 is modified to D-phenylalanine.

Belongs to the conotoxin I1 superfamily. In terms of processing, the natural D-Phe-44 form of the peptide is more potent than the L-Phe-44 form. As to expression, expressed by the venom duct.

Its subcellular location is the secreted. Iota-conotoxins bind to voltage-gated sodium channels and act as agonists by shifting the voltage-dependence of activation to more hyperpolarized levels. This toxin acts on Nav1.6/SCN8A &gt; Nav1.2/SCN2A &gt; Nav1.7/SCN9A sodium channels. Produces general excitatory symptoms upon intracorporeal injection and repetitive action potentials in the frog cutaneous pectoris muscle. Natural peptide (with D-Phe) is active on nerve, but not on muscle. Synthetic peptide (with L-Phe) is not active on both nerve and muscle. This Conus radiatus (Rayed cone) protein is Iota-conotoxin RXIA.